The chain runs to 1522 residues: ATP-binding cassette sub-family C member 3 (1522 aa).

The Extracellular segment spans residues 1–32 (MDRLCGSGELGSKFWDSNLTVYTNTPDLTPCF). N-linked (GlcNAc...) asparagine glycosylation is present at N18. A helical transmembrane segment spans residues 33-53 (QNSLLAWVPCIYLWAALPCYL). The Cytoplasmic segment spans residues 54 to 73 (FYLRHHRLGYIVLSCLSRLK). Residues 74–94 (TALGVLLWCISWVDLFYSFHG) form a helical membrane-spanning segment. The Extracellular segment spans residues 95–99 (LVHGS). A helical membrane pass occupies residues 100–120 (SPAPVFFITPLLVGITMLLAT). Topologically, residues 121–132 (LLIQYERLRGVR) are cytoplasmic. Residues 133–153 (SSGVLIIFWLLCVICAIIPFR) form a helical membrane-spanning segment. Residues 154 to 171 (SKILLALAEGKILDPFRF) are Extracellular-facing. Residues 172–192 (TTFYIYFALVLCAFILSCFQE) traverse the membrane as a helical segment. Topologically, residues 193-301 (KPPLFSPENL…KTKKPSFLRA (109 aa)) are cytoplasmic. The helical transmembrane segment at 302–322 (LVRTFTSSLLMGACFKLIQDL) threads the bilayer. One can recognise an ABC transmembrane type-1 1 domain in the interval 310-592 (LLMGACFKLI…LPQLISGMTQ (283 aa)). Over 323 to 347 (SPSSTHSCSASSSGLFRPHGPYWWG) the chain is Extracellular. The helical transmembrane segment at 348-368 (FLLAGLMFVSSTMQTLILHQH) threads the bilayer. At 369 to 424 (YHCIFVMALRIRTAIIGVIYRKALTITNSVKREYTVGEMVNLMSVDAQRFMDVSPF) the chain is on the cytoplasmic side. Residues 425 to 445 (INLLWSAPLQVILAIYFLWQI) form a helical membrane-spanning segment. Residues 446–448 (LGP) lie on the Extracellular side of the membrane. Residues 449–469 (SALAGVAVIVLLIPLNGAVSM) traverse the membrane as a helical segment. Residues 470–531 (KMKTYQVQQM…LLRKGAYLQA (62 aa)) are Cytoplasmic-facing. The helical transmembrane segment at 532-552 (ISTFIWVCTPFMVTLITLGVY) threads the bilayer. Residues 553 to 574 (VCVDKNNVLDAEKAFVSLSLFN) lie on the Extracellular side of the membrane. The chain crosses the membrane as a helical span at residues 575–595 (ILKIPLNLLPQLISGMTQTSV). Topologically, residues 596–958 (SLKRIQDFLN…VKLSVYWDYA (363 aa)) are cytoplasmic. Positions 625 to 849 (ITIHNGTFSW…DGSFANFLRN (225 aa)) constitute an ABC transporter 1 domain. Residue 659 to 666 (GPVGCGKS) participates in ATP binding. 2 positions are modified to phosphoserine: S902 and S905. The chain crosses the membrane as a helical span at residues 959-979 (KSVGLCTTLFICLLYAGQNAV). The 282-residue stretch at 966 to 1247 (TLFICLLYAG…MIRTLSDLES (282 aa)) folds into the ABC transmembrane type-1 2 domain. Residues 980–1016 (AIGANVWLSAWTNDVEEHGQQNNTSVRLGVYATLGIL) lie on the Extracellular side of the membrane. N-linked (GlcNAc...) asparagine glycans are attached at residues N1001 and N1002. The helical transmembrane segment at 1017-1037 (QGLLVMLSAFTMVVGAIQAAR) threads the bilayer. Residues 1038 to 1080 (LLHTALLHNQIRAPQSFFDTTPSGRILNRFSKDIYVIHEVLAP) lie on the Cytoplasmic side of the membrane. A helical transmembrane segment spans residues 1081–1101 (TILMLFNSFYTSISTIVVIVA). A topological domain (extracellular) is located at residue S1102. Residues 1103–1123 (TPLFCVVVLPLAVFYGFVQRF) form a helical membrane-spanning segment. The Cytoplasmic segment spans residues 1124–1194 (YVATSRQLKR…ASNRWLGVHV (71 aa)). Residues 1195-1215 (EFVGNCVVLFSALFAVIGRNS) traverse the membrane as a helical segment. At 1216–1217 (LN) the chain is on the extracellular side. Residues 1218–1238 (PGLVGLSVSYALQVTLSLNWM) form a helical membrane-spanning segment. The Cytoplasmic portion of the chain corresponds to 1239 to 1522 (IRTLSDLESN…YGMAKDAGLA (284 aa)). The region spanning 1286–1518 (FRNYSVRYRP…GGIFYGMAKD (233 aa)) is the ABC transporter 2 domain. 1318-1325 (GRTGAGKS) lines the ATP pocket.

The protein belongs to the ABC transporter superfamily. ABCC family. Conjugate transporter (TC 3.A.1.208) subfamily. Expressed in lung, ileum, colon and liver. Higher in liver of Eisai hyperbilirubinemic rats.

It is found in the basolateral cell membrane. Its subcellular location is the basal cell membrane. The catalysed reaction is an S-substituted glutathione(in) + ATP + H2O = an S-substituted glutathione(out) + ADP + phosphate + H(+). The enzyme catalyses ATP + H2O + xenobioticSide 1 = ADP + phosphate + xenobioticSide 2.. It catalyses the reaction taurocholate(in) + ATP + H2O = taurocholate(out) + ADP + phosphate + H(+). It carries out the reaction glycocholate(in) + ATP + H2O = glycocholate(out) + ADP + phosphate + H(+). The catalysed reaction is taurolithocholate 3-sulfate(in) + ATP + H2O = taurolithocholate 3-sulfate(out) + ADP + phosphate + H(+). The enzyme catalyses 17beta-estradiol 17-O-(beta-D-glucuronate)(in) + ATP + H2O = 17beta-estradiol 17-O-(beta-D-glucuronate)(out) + ADP + phosphate + H(+). It catalyses the reaction dehydroepiandrosterone 3-sulfate(in) + ATP + H2O = dehydroepiandrosterone 3-sulfate(out) + ADP + phosphate + H(+). It carries out the reaction leukotriene C4(in) + ATP + H2O = leukotriene C4(out) + ADP + phosphate + H(+). The catalysed reaction is (4Z,15Z)-bilirubin IXalpha C8-beta-D-glucuronoside(in) + ATP + H2O = (4Z,15Z)-bilirubin IXalpha C8-beta-D-glucuronoside(out) + ADP + phosphate + H(+). The enzyme catalyses (4Z,15Z)-bilirubin IXalpha C8,C12-beta-D-bisglucuronoside(in) + ATP + H2O = (4Z,15Z)-bilirubin IXalpha C8,C12-beta-D-bisglucuronoside(out) + ADP + phosphate + H(+). It catalyses the reaction taurochenodeoxycholate 3-sulfate(in) + ATP + H2O = taurochenodeoxycholate 3-sulfate(out) + ADP + phosphate + H(+). Its function is as follows. ATP-dependent transporter of the ATP-binding cassette (ABC) family that binds and hydrolyzes ATP to enable active transport of various substrates including many drugs, toxicants and endogenous compound across cell membranes. Transports glucuronide conjugates such as bilirubin diglucuronide, estradiol-17-beta-o-glucuronide and GSH conjugates such as leukotriene C4 (LTC4). Transports also various bile salts (taurocholate, glycocholate, taurochenodeoxycholate-3-sulfate, taurolithocholate- 3-sulfate). Does not contribute substantially to bile salt physiology but provides an alternative route for the export of bile acids and glucuronides from cholestatic hepatocytes. May contribute to regulate the transport of organic compounds in testes across the blood-testis-barrier. This is ATP-binding cassette sub-family C member 3 (Abcc3) from Rattus norvegicus (Rat).